Consider the following 442-residue polypeptide: Putative nucleotide-sugar transporter YMD8 (442 aa).

At 1-3 the chain is on the cytoplasmic side; it reads MNR. Residues 4–24 form a helical membrane-spanning segment; it reads TVFLAFVFGWYFCSIALSIYN. Over 25–32 the chain is Extracellular; it reads RWMFDPKD. Residues 33-53 traverse the membrane as a helical segment; sequence GLGIGYPVLVTTFHQATLWLL. Topologically, residues 54–76 are cytoplasmic; sequence SGIYIKLRHKPVKNVLRKNNGFN. Residues 77–97 traverse the membrane as a helical segment; sequence WSFFLKFLLPTAVASAGDIGL. Topologically, residues 98 to 107 are extracellular; it reads SNVSFQYVPL. N-linked (GlcNAc...) asparagine glycosylation is present at asparagine 99. The chain crosses the membrane as a helical span at residues 108 to 128; sequence TIYTIIKSSSIAFVLLFGCIF. Residues 129 to 132 lie on the Cytoplasmic side of the membrane; it reads KLEK. The chain crosses the membrane as a helical span at residues 133-153; sequence FHWKLALSVIIMFVGVALMVF. Topologically, residues 154–166 are extracellular; it reads KPSDSTSTKNDQA. Residues 167–187 form a helical membrane-spanning segment; sequence LVIFGSFLVLASSCLSGLRWV. Residues 188–254 are Cytoplasmic-facing; the sequence is YTQLMLRNNP…PIHTIHQLAP (67 aa). Residue serine 209 is modified to Phosphoserine. A helical membrane pass occupies residues 255-275; that stretch reads IMGITLLLTSLLVEKPFPGIF. The Extracellular portion of the chain corresponds to 276-301; the sequence is SSSIFRLDTSNGGVGTETTVLSIVRG. Residues 302–322 traverse the membrane as a helical segment; the sequence is IVLLILPGFAVFLLTICEFSI. The Cytoplasmic segment spans residues 323-329; that stretch reads LEQTPVL. A helical transmembrane segment spans residues 330–350; the sequence is TVSIVGIVKELLTVIFGIIIL. The Extracellular segment spans residues 351-355; the sequence is SERLS. A helical membrane pass occupies residues 356-376; sequence GFYNWLGMLIIMADVCYYNYF. The Cytoplasmic portion of the chain corresponds to 377–442; sequence RYKQDLLQKY…QNVSRSSQQV (66 aa).

It belongs to the TPT transporter family. SLC35C subfamily.

It localises to the golgi apparatus membrane. Its subcellular location is the cytoplasmic vesicle. The protein localises to the COPI-coated vesicle membrane. This chain is Putative nucleotide-sugar transporter YMD8 (YMD8), found in Saccharomyces cerevisiae (strain ATCC 204508 / S288c) (Baker's yeast).